Here is a 1007-residue protein sequence, read N- to C-terminus: Integrator complex subunit 8 (1007 aa).

The WFEF motif signature appears at 19–24 (WFEFLL). A compositionally biased stretch (polar residues) spans 56–78 (TAQESVGTPGSDLQNLNQTPSNS). Residues 56 to 112 (TAQESVGTPGSDLQNLNQTPSNSGPIPGVVGGAPAPTTPTASGGVGMPHSPQRPAEK) form a disordered region. A compositionally biased stretch (low complexity) spans 79–97 (GPIPGVVGGAPAPTTPTAS).

Belongs to the Integrator subunit 8 family. As to quaternary structure, belongs to the multiprotein complex Integrator, at least composed of IntS1, IntS2, IntS3, IntS4, omd/IntS5, IntS6, defl/IntS7, IntS8, IntS9, IntS10, IntS11, IntS12, asun/IntS13, IntS14 and IntS15. The core complex associates with protein phosphatase 2A subunits mts/PP2A and Pp2A-29B, to form the Integrator-PP2A (INTAC) complex.

Its subcellular location is the nucleus. The protein localises to the chromosome. Component of the integrator complex, a multiprotein complex that terminates RNA polymerase II (Pol II) transcription in the promoter-proximal region of genes. The integrator complex provides a quality checkpoint during transcription elongation by driving premature transcription termination of transcripts that are unfavorably configured for transcriptional elongation: the complex terminates transcription by (1) catalyzing dephosphorylation of the C-terminal domain (CTD) of Pol II subunit Polr2A/Rbp1 and Spt5, and (2) degrading the exiting nascent RNA transcript via endonuclease activity. The integrator complex is also involved in the 3'-end processing of the U7 snRNA, and also the spliceosomal snRNAs U1, U2, U4 and U5. Within the integrator complex, INTS8 is required for the recruitment of protein phosphatase 2A (PP2A) to transcription pause-release checkpoint. The sequence is that of Integrator complex subunit 8 from Drosophila melanogaster (Fruit fly).